Reading from the N-terminus, the 484-residue chain is Protein nucleotidyltransferase YdiU (484 aa).

Residues Gly-81, Gly-83, Arg-84, Lys-103, Asp-115, Gly-116, Arg-166, and Arg-173 each coordinate ATP. Catalysis depends on Asp-244, which acts as the Proton acceptor. Mg(2+)-binding residues include Asn-245 and Asp-254. Asp-254 is an ATP binding site.

It belongs to the SELO family. The cofactor is Mg(2+). It depends on Mn(2+) as a cofactor.

The catalysed reaction is L-seryl-[protein] + ATP = 3-O-(5'-adenylyl)-L-seryl-[protein] + diphosphate. The enzyme catalyses L-threonyl-[protein] + ATP = 3-O-(5'-adenylyl)-L-threonyl-[protein] + diphosphate. It carries out the reaction L-tyrosyl-[protein] + ATP = O-(5'-adenylyl)-L-tyrosyl-[protein] + diphosphate. It catalyses the reaction L-histidyl-[protein] + UTP = N(tele)-(5'-uridylyl)-L-histidyl-[protein] + diphosphate. The catalysed reaction is L-seryl-[protein] + UTP = O-(5'-uridylyl)-L-seryl-[protein] + diphosphate. The enzyme catalyses L-tyrosyl-[protein] + UTP = O-(5'-uridylyl)-L-tyrosyl-[protein] + diphosphate. Nucleotidyltransferase involved in the post-translational modification of proteins. It can catalyze the addition of adenosine monophosphate (AMP) or uridine monophosphate (UMP) to a protein, resulting in modifications known as AMPylation and UMPylation. This Shewanella sp. (strain MR-7) protein is Protein nucleotidyltransferase YdiU.